The chain runs to 578 residues: G protein-coupled receptor kinase 4 (578 aa).

N-acetylmethionine is present on Met1. The segment at 1-154 (MELENIVANS…ECTRVAHNYL (154 aa)) is N-terminal. In terms of domain architecture, RGS spans 52–172 (DYSSLCDKQP…QESSYFSQFL (121 aa)). Positions 187 to 449 (FRHYRVLGKG…AAGVKQHPVF (263 aa)) constitute a Protein kinase domain. Residues 193-201 (LGKGGFGEV) and Lys216 each bind ATP. Asp312 serves as the catalytic Proton acceptor. In terms of domain architecture, AGC-kinase C-terminal spans 450–515 (KDINFRRLEA…GCVSIPWQNE (66 aa)). At Ser485 the chain carries Phosphoserine.

Belongs to the protein kinase superfamily. AGC Ser/Thr protein kinase family. GPRK subfamily. As to quaternary structure, interacts with DRD3. In terms of processing, palmitoylated. In terms of tissue distribution, isoform 1, isoform 2, isoform 3, and isoform 4 are expressed in testis. Isoform 4 is expressed in myometrium.

Its subcellular location is the cytoplasm. It is found in the cell cortex. It catalyses the reaction [G-protein-coupled receptor] + ATP = [G-protein-coupled receptor]-phosphate + ADP + H(+). Its activity is regulated as follows. Inhibited by heparin. Functionally, specifically phosphorylates the activated forms of G protein-coupled receptors. GRK4-alpha can phosphorylate rhodopsin and its activity is inhibited by calmodulin; the other three isoforms do not phosphorylate rhodopsin and do not interact with calmodulin. GRK4-alpha and GRK4-gamma phosphorylate DRD3. Phosphorylates ADRB2. The polypeptide is G protein-coupled receptor kinase 4 (GRK4) (Homo sapiens (Human)).